The following is a 175-amino-acid chain: MGKIFFYEERNFQGRHYECGSDYSDLSSYFNRCNSIRVEGGNWILYEHPSYKGNQYYLWKGEYPDFQRWMGFNDSIRSCRFLPNYQGQYKMRIYERGDYQGQMMEFFDDCPNTYERFNFHDIHSCNVFDGHWMFYEEPNYRGRQYYLRPGEYRRYNDWGASSPRIGSFRRVYHRF.

Beta/gamma crystallin 'Greek key' domains are found at residues 2-40 (GKIF…RVEG) and 41-83 (GNWI…RFLP). The tract at residues 84–88 (NYQGQ) is connecting peptide. 2 Beta/gamma crystallin 'Greek key' domains span residues 89-129 (YKMR…NVFD) and 130-172 (GHWM…RRVY).

Belongs to the beta/gamma-crystallin family. Monomer.

In terms of biological role, crystallins are the dominant structural components of the vertebrate eye lens. The sequence is that of Gamma-crystallin-1 (cryg1) from Xenopus laevis (African clawed frog).